Consider the following 453-residue polypeptide: Aldehyde dehydrogenase, dimeric NADP-preferring (453 aa).

Position 2 is an N-acetylserine (Ser-2). Lys-178 carries the N6-acetyllysine modification. NAD(+) is bound at residue 188-193 (GNTAVG). The residue at position 194 (Lys-194) is an N6-acetyllysine. Catalysis depends on residues Glu-210 and Cys-244.

This sequence belongs to the aldehyde dehydrogenase family. Homodimer.

The protein localises to the cytoplasm. It catalyses the reaction an aldehyde + NAD(+) + H2O = a carboxylate + NADH + 2 H(+). It carries out the reaction octanal + NAD(+) + H2O = octanoate + NADH + 2 H(+). Its function is as follows. ALDHs play a major role in the detoxification of alcohol-derived acetaldehyde. They are involved in the metabolism of corticosteroids, biogenic amines, neurotransmitters, and lipid peroxidation. Oxidizes medium and long chain aldehydes into non-toxic fatty acids. Preferentially oxidizes aromatic aldehyde substrates. Comprises about 50 percent of corneal epithelial soluble proteins. May play a role in preventing corneal damage caused by ultraviolet light. This Canis lupus familiaris (Dog) protein is Aldehyde dehydrogenase, dimeric NADP-preferring (ALDH3A1).